A 136-amino-acid chain; its full sequence is MALFTAKVTARGGRAGHITSDDGVLDFDIVMPNAKKEGQTGTNPEQLFAAGYAACFGGALEHVAKEQNIEIDSEIEGQVSLMKDESDGGFKIGVTLVVNTKDLDREKAQELVNAAHEFCPYSKATRGNVDVKLELK.

The protein belongs to the OsmC/Ohr family.

Involved in organic hydroperoxide resistance. This Bacillus subtilis (strain 168) protein is Organic hydroperoxide resistance protein OhrB (ohrB).